The chain runs to 149 residues: Calmodulin-2 (149 aa).

Position 2 is an N-acetylalanine (Ala2). EF-hand domains follow at residues 8–43 (EQIAEFKEAFSLFDKDGDGCITTKELGTVMRSLGQN), 44–79 (PTEAELQDMISEVDADQNGTIDFPEFLNLMARKMKD), 81–116 (DSEEELKEAFKVFDKDQNGYISAADVRHVMTNLGEK), and 117–149 (LTDEEVDEMIREADMDGDGQVNYEEFVRMMLAK). Residues Asp21, Asp23, Asp25, Cys27, Glu32, Asp57, Asp59, Asn61, Thr63, Glu68, Asp94, Asp96, Asn98, Tyr100, and Asp105 each contribute to the Ca(2+) site. Lys116 is subject to N6,N6,N6-trimethyllysine. Asp130, Asp132, Asp134, Gln136, and Glu141 together coordinate Ca(2+).

The protein belongs to the calmodulin family.

Its function is as follows. Calmodulin mediates the control of a large number of enzymes, ion channels and other proteins by Ca(2+). Among the enzymes to be stimulated by the calmodulin-Ca(2+) complex are a number of protein kinases and phosphatases. The chain is Calmodulin-2 (CAM72) from Petunia hybrida (Petunia).